The chain runs to 61 residues: Conotoxin Cal14.6 (61 aa).

Residues 1–21 form the signal peptide; sequence MKFLLFLSVALLLTSFIETEA. A propeptide spanning residues 22 to 38 is cleaved from the precursor; sequence GPVNEAGVERLFRALVG. Pro57 bears the 4-hydroxyproline; partial mark. Proline amide is present on Pro60.

In terms of processing, contains 2 disulfide bonds. Expressed by the venom duct.

The protein resides in the secreted. Its function is as follows. Probable neurotoxin with unknown target. Possibly targets ion channels. The protein is Conotoxin Cal14.6 of Californiconus californicus (California cone).